The sequence spans 263 residues: Hydroxyethylthiazole kinase (263 aa).

M45 serves as a coordination point for substrate. Residues R121 and S167 each contribute to the ATP site. Substrate is bound at residue G194.

Belongs to the Thz kinase family. It depends on Mg(2+) as a cofactor.

The enzyme catalyses 5-(2-hydroxyethyl)-4-methylthiazole + ATP = 4-methyl-5-(2-phosphooxyethyl)-thiazole + ADP + H(+). The protein operates within cofactor biosynthesis; thiamine diphosphate biosynthesis; 4-methyl-5-(2-phosphoethyl)-thiazole from 5-(2-hydroxyethyl)-4-methylthiazole: step 1/1. Catalyzes the phosphorylation of the hydroxyl group of 4-methyl-5-beta-hydroxyethylthiazole (THZ). This chain is Hydroxyethylthiazole kinase, found in Vibrio parahaemolyticus serotype O3:K6 (strain RIMD 2210633).